A 433-amino-acid polypeptide reads, in one-letter code: UDP-N-acetylglucosamine 1-carboxyvinyltransferase 1 (433 aa).

A phosphoenolpyruvate-binding site is contributed by 22-23 (KN). UDP-N-acetyl-alpha-D-glucosamine is bound at residue Arg-95. Cys-119 acts as the Proton donor in catalysis. Cys-119 carries the post-translational modification 2-(S-cysteinyl)pyruvic acid O-phosphothioketal. Residues 124 to 128 (RPVDL), Asp-307, and Val-329 each bind UDP-N-acetyl-alpha-D-glucosamine.

The protein belongs to the EPSP synthase family. MurA subfamily.

The protein resides in the cytoplasm. It catalyses the reaction phosphoenolpyruvate + UDP-N-acetyl-alpha-D-glucosamine = UDP-N-acetyl-3-O-(1-carboxyvinyl)-alpha-D-glucosamine + phosphate. The protein operates within cell wall biogenesis; peptidoglycan biosynthesis. Its function is as follows. Cell wall formation. Adds enolpyruvyl to UDP-N-acetylglucosamine. This is UDP-N-acetylglucosamine 1-carboxyvinyltransferase 1 from Latilactobacillus sakei subsp. sakei (strain 23K) (Lactobacillus sakei subsp. sakei).